Here is a 360-residue protein sequence, read N- to C-terminus: Molybdenum import ATP-binding protein ModC (360 aa).

The ABC transporter domain occupies 5 to 234 (VKLHLGYQDF…LDLPLALGDD (230 aa)). 32–39 (GHSGSGKT) provides a ligand contact to ATP. The Mop domain maps to 295–360 (HSSILNRLPV…AQIKAVAVLA (66 aa)).

This sequence belongs to the ABC transporter superfamily. Molybdate importer (TC 3.A.1.8) family. The complex is composed of two ATP-binding proteins (ModC), two transmembrane proteins (ModB) and a solute-binding protein (ModA).

The protein resides in the cell inner membrane. It catalyses the reaction molybdate(out) + ATP + H2O = molybdate(in) + ADP + phosphate + H(+). Its function is as follows. Part of the ABC transporter complex ModABC involved in molybdenum import. Responsible for energy coupling to the transport system. The chain is Molybdenum import ATP-binding protein ModC from Pseudomonas fluorescens (strain ATCC BAA-477 / NRRL B-23932 / Pf-5).